A 499-amino-acid polypeptide reads, in one-letter code: Interleukin-17 receptor B (499 aa).

Residues 1–17 form the signal peptide; it reads MLLVLLILAASCRSALP. The Extracellular portion of the chain corresponds to 18 to 286; it reads REPTIQCGSE…PDDNRRMLGG (269 aa). N67, N103, N156, and N197 each carry an N-linked (GlcNAc...) asparagine glycan. A helical membrane pass occupies residues 287–307; it reads WLPLFLVLLVAVWVLAAGIYL. Residues 308 to 499 are Cytoplasmic-facing; it reads TWRQGRSTKT…QACHDSCSPL (192 aa). Residues 328–474 enclose the SEFIR domain; it reads LIKVLVVYPS…LMKDATAFHT (147 aa).

As to quaternary structure, interacts with DAZAP2. Interacts with TRAF3IP2. As to expression, liver and testis. Expressed at lower level in kidney and lung. Expressed in selected T-cell, B-cell and myeloid cell lines.

The protein resides in the cell membrane. It localises to the secreted. Its function is as follows. Receptor for the pro-inflammatory cytokines IL17B and IL17E. May play a role in controlling the growth and/or differentiation of hematopoietic cells. This chain is Interleukin-17 receptor B (Il17rb), found in Mus musculus (Mouse).